Consider the following 68-residue polypeptide: ATP synthase subunit c (68 aa).

2 helical membrane-spanning segments follow: residues 4–24 and 45–65; these read IAAA…NGLI and IMFI…VIAF.

The protein belongs to the ATPase C chain family. F-type ATPases have 2 components, F(1) - the catalytic core - and F(0) - the membrane proton channel. F(1) has five subunits: alpha(3), beta(3), gamma(1), delta(1), epsilon(1). F(0) has three main subunits: a(1), b(2) and c(10-14). The alpha and beta chains form an alternating ring which encloses part of the gamma chain. F(1) is attached to F(0) by a central stalk formed by the gamma and epsilon chains, while a peripheral stalk is formed by the delta and b chains.

It localises to the cell membrane. In terms of biological role, f(1)F(0) ATP synthase produces ATP from ADP in the presence of a proton or sodium gradient. F-type ATPases consist of two structural domains, F(1) containing the extramembraneous catalytic core and F(0) containing the membrane proton channel, linked together by a central stalk and a peripheral stalk. During catalysis, ATP synthesis in the catalytic domain of F(1) is coupled via a rotary mechanism of the central stalk subunits to proton translocation. Its function is as follows. Key component of the F(0) channel; it plays a direct role in translocation across the membrane. A homomeric c-ring of between 10-14 subunits forms the central stalk rotor element with the F(1) delta and epsilon subunits. The chain is ATP synthase subunit c from Staphylococcus saprophyticus subsp. saprophyticus (strain ATCC 15305 / DSM 20229 / NCIMB 8711 / NCTC 7292 / S-41).